A 371-amino-acid chain; its full sequence is Ubiquitin receptor RAD23b (371 aa).

A Ubiquitin-like domain is found at 1 to 79 (MKLTVKTLKG…LVVMLSKSKS (79 aa)). Residues 79–117 (SGGSAGQASVQTSSVSQPVSATTSSTKPAAPSTTQSSPV) show a composition bias toward low complexity. The segment at 79–142 (SGGSAGQASV…DTYGQAASTL (64 aa)) is disordered. Polar residues predominate over residues 128–142 (PAAQTDTYGQAASTL). In terms of domain architecture, UBA 1 spans 146–189 (SSLEQMVQQIMEMGGGSWDKETVTRALRAAYNNPERAVDYLYSG). The STI1 domain maps to 242-285 (GTLEFLRNNDQFQQLRTMVHSNPQILQPMLQELGKQNPQLLRLI). Residues 325–365 (PAEQEAIQRLEAMGFDRALVIEAFLACDRNEELAANYLLEN) enclose the UBA 2 domain.

This sequence belongs to the RAD23 family. Interacts with 'Lys-48'-linked polyubiquitin chains. Interacts with RPN10 via its ubiquitin-like domain. Interacts with UBQ1, UBQ2, UBQ5, UBQ7, UBQ10, UBQ11 and IAA16. Binds to RAD4. As to expression, widely expressed in the whole plant.

Its subcellular location is the nucleus. The protein resides in the cytoplasm. Its function is as follows. May be involved in nucleotide excision repair. Binds and presumably selects ubiquitin-conjugates for destruction. Prefers multiubiquitin chains rather than single ubiquitins, with a binding affinity for 'Lys-48'-linked ubiquitin chains. Acts as a ubiquitin receptor that associates with the 26S proteasomal docking subunit RPN10 for the indirect recognition of ubiquitinated substrates of ubiquitin/26S proteasome-mediated proteolysis (UPP). Involved in UV tolerance in both roots and hypocotyls, specifically in dark conditions. The sequence is that of Ubiquitin receptor RAD23b from Arabidopsis thaliana (Mouse-ear cress).